We begin with the raw amino-acid sequence, 330 residues long: Replication factor C small subunit (330 aa).

Residue Gly48 to Thr55 participates in ATP binding.

Belongs to the activator 1 small subunits family. RfcS subfamily. Heteropentamer composed of four small subunits (RfcS) and one large subunit (RfcL). A homotetramer of this subunit interacts with PCNA heterodimer PCNA1-PCNA2.

Functionally, part of the RFC clamp loader complex which loads the PCNA sliding clamp onto DNA. The complex possesses DNA-dependent ATPase activity. In Saccharolobus solfataricus (strain ATCC 35092 / DSM 1617 / JCM 11322 / P2) (Sulfolobus solfataricus), this protein is Replication factor C small subunit (rfcS).